An 89-amino-acid chain; its full sequence is uncharacterized protein (89 aa).

Transmembrane regions (helical) follow at residues 9 to 29 (ICNF…LHSI), 35 to 55 (ISLS…YIYL), and 65 to 85 (ILFA…FGTS).

Its subcellular location is the membrane. This is an uncharacterized protein from Schizosaccharomyces pombe (strain 972 / ATCC 24843) (Fission yeast).